The chain runs to 260 residues: UPF0294 protein plu0699 (260 aa).

The protein belongs to the UPF0294 family.

Its subcellular location is the cytoplasm. The chain is UPF0294 protein plu0699 from Photorhabdus laumondii subsp. laumondii (strain DSM 15139 / CIP 105565 / TT01) (Photorhabdus luminescens subsp. laumondii).